A 217-amino-acid chain; its full sequence is Probable cytidylate kinase (217 aa).

9 to 17 (GPAGSGKST) provides a ligand contact to ATP.

This sequence belongs to the cytidylate kinase family. Type 1 subfamily.

It catalyses the reaction CMP + ATP = CDP + ADP. It carries out the reaction dCMP + ATP = dCDP + ADP. This Vairimorpha ceranae (strain BRL01) (Microsporidian parasite) protein is Probable cytidylate kinase.